The sequence spans 499 residues: Maturase K (499 aa).

Belongs to the intron maturase 2 family. MatK subfamily.

Its subcellular location is the plastid. The protein localises to the chloroplast. In terms of biological role, usually encoded in the trnK tRNA gene intron. Probably assists in splicing its own and other chloroplast group II introns. The sequence is that of Maturase K from Camellia sinensis (Tea plant).